The sequence spans 564 residues: uncharacterized protein (564 aa).

A signal peptide spans 1–21; it reads MRRIGAITALSLPVLLSLLYS. A lipid anchor (N-palmitoyl cysteine) is attached at Cys-22. Cys-22 carries S-diacylglycerol cysteine lipidation.

It localises to the cell membrane. This is an uncharacterized protein from Aquifex aeolicus (strain VF5).